The primary structure comprises 205 residues: MATETLVELAAYLKEKLGDKLEESALAFGELTIVSRLDAIIDVLMFIRDDSRCQFINIIDISGVDYPARDKRFDVSYQLLSPFQNLRLRVKVRTDEDVPVPSVCSVYPGAEWYERETYDMYGILFSGHPDLRRILTDYGFEGHPLRKDFPVTGFVECRYDNEAKRVIYEPVVLRQEMRNFDFLSPWEGADYVLPCDKKAKGNGDK.

It belongs to the complex I 30 kDa subunit family. NDH-1 is composed of 14 different subunits. Subunits NuoB, C, D, E, F, and G constitute the peripheral sector of the complex.

Its subcellular location is the cell inner membrane. It catalyses the reaction a quinone + NADH + 5 H(+)(in) = a quinol + NAD(+) + 4 H(+)(out). NDH-1 shuttles electrons from NADH, via FMN and iron-sulfur (Fe-S) centers, to quinones in the respiratory chain. The immediate electron acceptor for the enzyme in this species is believed to be ubiquinone. Couples the redox reaction to proton translocation (for every two electrons transferred, four hydrogen ions are translocated across the cytoplasmic membrane), and thus conserves the redox energy in a proton gradient. The protein is NADH-quinone oxidoreductase subunit C of Bartonella bacilliformis (strain ATCC 35685 / KC583 / Herrer 020/F12,63).